The primary structure comprises 294 residues: UDP-3-O-acyl-N-acetylglucosamine deacetylase (294 aa).

The Zn(2+) site is built by histidine 75, histidine 232, and aspartate 236. Catalysis depends on histidine 259, which acts as the Proton donor.

This sequence belongs to the LpxC family. Requires Zn(2+) as cofactor.

It catalyses the reaction a UDP-3-O-[(3R)-3-hydroxyacyl]-N-acetyl-alpha-D-glucosamine + H2O = a UDP-3-O-[(3R)-3-hydroxyacyl]-alpha-D-glucosamine + acetate. Its pathway is glycolipid biosynthesis; lipid IV(A) biosynthesis; lipid IV(A) from (3R)-3-hydroxytetradecanoyl-[acyl-carrier-protein] and UDP-N-acetyl-alpha-D-glucosamine: step 2/6. Its function is as follows. Catalyzes the hydrolysis of UDP-3-O-myristoyl-N-acetylglucosamine to form UDP-3-O-myristoylglucosamine and acetate, the committed step in lipid A biosynthesis. This chain is UDP-3-O-acyl-N-acetylglucosamine deacetylase, found in Campylobacter lari (strain RM2100 / D67 / ATCC BAA-1060).